Consider the following 384-residue polypeptide: Potassium channel subfamily K member 18 (384 aa).

The Cytoplasmic segment spans residues 1–23 (MEVSGHPQARRCCPEALGKLFPG). Residues 24–44 (LCFLCFLVTYALVGAVVFSAI) form a helical membrane-spanning segment. An N-linked (GlcNAc...) asparagine glycan is attached at Asn70. Positions 103 to 129 (FLSSLFFCCTVFSTVGYGYIYPVTRLG) form an intramembrane region, pore-forming. K(+) is bound by residues Thr116, Val117, Gly118, and Tyr119. The tract at residues 116-121 (TVGYGY) is selectivity filter 1. Residues 130–148 (KYLCMLYALFGIPLMFLVL) traverse the membrane as a helical segment. Over 149–280 (TDTGDILATI…EVGQQVERLD (132 aa)) the chain is Cytoplasmic. Positions 200-205 (PQIIIS) are interaction with calcineurin. The interaction with YWHAH stretch occupies residues 249-254 (RSNSCP). A phosphoserine mark is found at Ser252 and Ser264. A helical membrane pass occupies residues 281-301 (IPLPIIALIVFAYISCAAAIL). An intramembrane region (pore-forming) is located at residues 314–328 (FYFCFVTLTTIGFGD). Residues 323–328 (TIGFGD) are selectivity filter 2. A helical transmembrane segment spans residues 335-355 (NFFLFFSIYIIVGMEIVFIAF). The Cytoplasmic segment spans residues 356-384 (KLVQNRLIDIYKNVMLFFAKGKFYHLVKK).

The protein belongs to the two pore domain potassium channel (TC 1.A.1.8) family. In terms of assembly, homodimer. Heterodimer with KCNK2. Heterodimer with KCNK10. Interacts with calcineurin. Interacts with YWHAH, in a phosphorylation-dependent manner. In terms of processing, N-glycosylated. Post-translationally, phosphorylation of Ser-264 is required for the binding of 14-3-3eta/YWHAH. Calcineurin-mediated dephosphorylation enhances channel activity. Expressed in dorsal root ganglion and trigeminal ganglion neurons. Detected at low levels in spinal cord. Expressed in regulatory T cells (at protein level).

Its subcellular location is the cell membrane. The enzyme catalyses K(+)(in) = K(+)(out). Its activity is regulated as follows. Activated by volatile anesthetics but inhibited by amide local anesthetics. Inhibited by Ba(2+) ions. Inhibited by free polyunsaturated fatty acids. Channel conductance is sensitive to intracellular pH, it decreases at acidic pH and increases at basic pH. In contrast to its mouse ortholog, it is not regulated by extracellular protons. Insensitive to changes in temperature. In terms of biological role, k(+) channel that conducts outward and inward rectifying currents at depolarized and hyperpolarized membrane potentials, respectively. The outward rectifying currents are voltage-dependent, coupled to K(+) electrochemical gradient across the membrane, whereas the inward currents can be induced in response to activation of Ca(2+)-mobilizing receptors. Homo- and heterodimerizes to form functional channels with distinct regulatory and gating properties. In trigeminal ganglia sensory neurons, the heterodimers of KCNK18/TRESK and KCNK2/TREK-1 or KCNK10/TREK-2 inhibit neuronal firing and neurogenic inflammation by stabilizing the resting membrane potential at K(+) equilibrium potential as well as by regulating the threshold of action potentials and the spike frequency. In thymocytes, conducts K(+) currents upon T cell receptor (TCR) signaling leading to sustained Ca(2+) influx and NF-kappa-B activation, FOXP3 transcription and positive selection of regulatory T cell (Treg) progenitor subsets. Appears to mediate the analgesics effects of hydroxy-alpha-sanshool, a metabolite naturally present in Schezuan pepper and other Xanthoxylum plants. The chain is Potassium channel subfamily K member 18 from Homo sapiens (Human).